The primary structure comprises 203 residues: Holliday junction branch migration complex subunit RuvA (203 aa).

Residues 1–64 (MIGRLRGIII…EDAQLLYGFN (64 aa)) form a domain I region. The interval 65 to 142 (NKQERTLFKE…KGLHGDLFTP (78 aa)) is domain II. The interval 143 to 154 (AADLVLTSPASP) is flexible linker. Residues 155 to 203 (ATDDAEQEAVAALVALGYKPQEASRMVSKIARPDASSETLIREALHAAL) are domain III.

The protein belongs to the RuvA family. As to quaternary structure, homotetramer. Forms an RuvA(8)-RuvB(12)-Holliday junction (HJ) complex. HJ DNA is sandwiched between 2 RuvA tetramers; dsDNA enters through RuvA and exits via RuvB. An RuvB hexamer assembles on each DNA strand where it exits the tetramer. Each RuvB hexamer is contacted by two RuvA subunits (via domain III) on 2 adjacent RuvB subunits; this complex drives branch migration. In the full resolvosome a probable DNA-RuvA(4)-RuvB(12)-RuvC(2) complex forms which resolves the HJ.

It localises to the cytoplasm. Its function is as follows. The RuvA-RuvB-RuvC complex processes Holliday junction (HJ) DNA during genetic recombination and DNA repair, while the RuvA-RuvB complex plays an important role in the rescue of blocked DNA replication forks via replication fork reversal (RFR). RuvA specifically binds to HJ cruciform DNA, conferring on it an open structure. The RuvB hexamer acts as an ATP-dependent pump, pulling dsDNA into and through the RuvAB complex. HJ branch migration allows RuvC to scan DNA until it finds its consensus sequence, where it cleaves and resolves the cruciform DNA. This is Holliday junction branch migration complex subunit RuvA from Escherichia fergusonii (strain ATCC 35469 / DSM 13698 / CCUG 18766 / IAM 14443 / JCM 21226 / LMG 7866 / NBRC 102419 / NCTC 12128 / CDC 0568-73).